A 576-amino-acid chain; its full sequence is Low-affinity glucose transporter HXT4 (576 aa).

Residues 1–56 (MSEEAAYQEDTAVQNTPADALSPVESDSNSALSTPSNKAERDDMKDFDENHEESNN) are disordered. Over 1–66 (MSEEAAYQED…YVEIPKKPAS (66 aa)) the chain is Cytoplasmic. The span at 25 to 37 (ESDSNSALSTPSN) shows a compositional bias: polar residues. Residues 38–54 (KAERDDMKDFDENHEES) are compositionally biased toward basic and acidic residues. A Glycyl lysine isopeptide (Lys-Gly) (interchain with G-Cter in ubiquitin) cross-link involves residue Lys-45. A helical membrane pass occupies residues 67-87 (AYVTVSICCLMVAFGGFVFGW). Topologically, residues 88-122 (DTGTISGFVAQTDFIRRFGMKHHDGTYYLSKVRTG) are extracellular. A helical transmembrane segment spans residues 123-143 (LMVSIINIGCAIGGIILAKLG). Topologically, residues 144 to 149 (DMYGRK) are cytoplasmic. Residues 150 to 170 (MGLIVVVVIYIIGIIIQIASI) traverse the membrane as a helical segment. The Extracellular portion of the chain corresponds to 171 to 180 (NKWYQYFIGR). Residues 181 to 201 (IISGLGVGGIAVLSPMLISEV) traverse the membrane as a helical segment. The Cytoplasmic segment spans residues 202–207 (SPKHIR). A helical membrane pass occupies residues 208-228 (GTLVSCYQLMITLGIFLGYCT). The Extracellular segment spans residues 229-242 (NYGTKTYTNSVQWR). The helical transmembrane segment at 243–263 (VPLGLGFAWALFMIGGMTFVP) threads the bilayer. At 264-346 (ESPRYLVEVG…IQSLQQLTGD (83 aa)) the chain is on the cytoplasmic side. The chain crosses the membrane as a helical span at residues 347–363 (NYFFYYGTTVFTAVGLS). The Extracellular segment spans residues 364–369 (DSFETS). The chain crosses the membrane as a helical span at residues 370 to 387 (IVLGIVNFASTFVGIFLV). Over 388–394 (ERYGRRR) the chain is Cytoplasmic. A helical membrane pass occupies residues 395–415 (CLLWGAASMTACMVVFASVGV). Residues 416–437 (TRLWPNGKKNGSSKGAGNCMIV) lie on the Extracellular side of the membrane. Asn-425 is a glycosylation site (N-linked (GlcNAc...) asparagine). The helical transmembrane segment at 438–458 (FTCFYLFCFATTWAPIPFVVN) threads the bilayer. Over 459 to 475 (SETFPLRVKSKCMAIAQ) the chain is Cytoplasmic. The chain crosses the membrane as a helical span at residues 476-496 (ACNWIWGFLIGFFTPFISNAI). Asp-497 is a topological domain (extracellular). A helical transmembrane segment spans residues 498 to 518 (FYYGYVFMGCLVFSYFYVFFF). The Cytoplasmic portion of the chain corresponds to 519 to 576 (VPETKGLTLEEVNTLWEEGVLPWKSPSWVPPNKRGTDYNADDLMHDDQPFYKKMFGKK).

The protein belongs to the major facilitator superfamily. Sugar transporter (TC 2.A.1.1) family.

Its subcellular location is the cell membrane. Xylose uptake is strongly inhibited by glucose. In terms of biological role, low-affinity glucose transporter. Can also transport xylose. The sequence is that of Low-affinity glucose transporter HXT4 (HXT4) from Saccharomyces cerevisiae (strain JAY291) (Baker's yeast).